A 353-amino-acid chain; its full sequence is Probable dual-specificity RNA methyltransferase RlmN (353 aa).

Glutamate 104 (proton acceptor) is an active-site residue. The region spanning 112-341 is the Radical SAM core domain; that stretch reads DGGRKTICIS…ILNRRSPGKD (230 aa). Residues cysteine 119 and cysteine 346 are joined by a disulfide bond. Residues cysteine 126, cysteine 130, and cysteine 133 each coordinate [4Fe-4S] cluster. S-adenosyl-L-methionine contacts are provided by residues 173 to 174, serine 205, 228 to 230, and asparagine 304; these read GE and SLN. The active-site S-methylcysteine intermediate is the cysteine 346.

It belongs to the radical SAM superfamily. RlmN family. [4Fe-4S] cluster serves as cofactor.

It localises to the cytoplasm. It carries out the reaction adenosine(2503) in 23S rRNA + 2 reduced [2Fe-2S]-[ferredoxin] + 2 S-adenosyl-L-methionine = 2-methyladenosine(2503) in 23S rRNA + 5'-deoxyadenosine + L-methionine + 2 oxidized [2Fe-2S]-[ferredoxin] + S-adenosyl-L-homocysteine. The catalysed reaction is adenosine(37) in tRNA + 2 reduced [2Fe-2S]-[ferredoxin] + 2 S-adenosyl-L-methionine = 2-methyladenosine(37) in tRNA + 5'-deoxyadenosine + L-methionine + 2 oxidized [2Fe-2S]-[ferredoxin] + S-adenosyl-L-homocysteine. Specifically methylates position 2 of adenine 2503 in 23S rRNA and position 2 of adenine 37 in tRNAs. The protein is Probable dual-specificity RNA methyltransferase RlmN of Leptospira interrogans serogroup Icterohaemorrhagiae serovar copenhageni (strain Fiocruz L1-130).